Reading from the N-terminus, the 88-residue chain is Exodeoxyribonuclease 7 small subunit (88 aa).

The protein belongs to the XseB family. Heterooligomer composed of large and small subunits.

It localises to the cytoplasm. It catalyses the reaction Exonucleolytic cleavage in either 5'- to 3'- or 3'- to 5'-direction to yield nucleoside 5'-phosphates.. Bidirectionally degrades single-stranded DNA into large acid-insoluble oligonucleotides, which are then degraded further into small acid-soluble oligonucleotides. This chain is Exodeoxyribonuclease 7 small subunit, found in Tolumonas auensis (strain DSM 9187 / NBRC 110442 / TA 4).